Here is a 250-residue protein sequence, read N- to C-terminus: C-X-C motif chemokine 16 (250 aa).

A signal peptide spans Met1–Gly24. Residues Asn25–Ala200 are Extracellular-facing. Intrachain disulfides connect Cys33–Cys63 and Cys35–Cys77. The interval Val105 to Glu186 is disordered. 2 stretches are compositionally biased toward polar residues: residues Asp128 to Pro147 and Thr163 to Gly172. The helical transmembrane segment at Leu201–Val221 threads the bilayer. Residues Met222–Thr250 lie on the Cytoplasmic side of the membrane.

It belongs to the intercrine alpha (chemokine CxC) family. Glycosylated.

It localises to the membrane. Induces a strong chemotactic response. Induces calcium mobilization. Binds to CXCR6/Bonzo. Also acts as a scavenger receptor on macrophages, which specifically binds to OxLDL (oxidized low density lipoprotein), suggesting that it may be involved in pathophysiology such as atherogenesis. In Sus scrofa (Pig), this protein is C-X-C motif chemokine 16 (CXCL16).